Consider the following 521-residue polypeptide: Glutamyl-tRNA(Gln) amidotransferase subunit A, mitochondrial (521 aa).

Active-site charge relay system residues include lysine 61 and serine 139. Serine 163 acts as the Acyl-ester intermediate in catalysis.

Belongs to the amidase family. GatA subfamily. In terms of assembly, subunit of the heterotrimeric GatCAB amidotransferase (AdT) complex, composed of A, B and C subunits.

It is found in the mitochondrion. It catalyses the reaction L-glutamyl-tRNA(Gln) + L-glutamine + ATP + H2O = L-glutaminyl-tRNA(Gln) + L-glutamate + ADP + phosphate + H(+). In terms of biological role, allows the formation of correctly charged Gln-tRNA(Gln) through the transamidation of misacylated Glu-tRNA(Gln) in the mitochondria. The reaction takes place in the presence of glutamine and ATP through an activated gamma-phospho-Glu-tRNA(Gln). The polypeptide is Glutamyl-tRNA(Gln) amidotransferase subunit A, mitochondrial (Ajellomyces capsulatus (strain G186AR / H82 / ATCC MYA-2454 / RMSCC 2432) (Darling's disease fungus)).